The chain runs to 317 residues: Acetyl-coenzyme A carboxylase carboxyl transferase subunit alpha (317 aa).

The 254-residue stretch at 40–293 (LEVRVREAIV…GDVIANALGE (254 aa)) folds into the CoA carboxyltransferase C-terminal domain.

The protein belongs to the AccA family. As to quaternary structure, acetyl-CoA carboxylase is a heterohexamer composed of biotin carboxyl carrier protein (AccB), biotin carboxylase (AccC) and two subunits each of ACCase subunit alpha (AccA) and ACCase subunit beta (AccD).

Its subcellular location is the cytoplasm. It catalyses the reaction N(6)-carboxybiotinyl-L-lysyl-[protein] + acetyl-CoA = N(6)-biotinyl-L-lysyl-[protein] + malonyl-CoA. Its pathway is lipid metabolism; malonyl-CoA biosynthesis; malonyl-CoA from acetyl-CoA: step 1/1. Component of the acetyl coenzyme A carboxylase (ACC) complex. First, biotin carboxylase catalyzes the carboxylation of biotin on its carrier protein (BCCP) and then the CO(2) group is transferred by the carboxyltransferase to acetyl-CoA to form malonyl-CoA. The polypeptide is Acetyl-coenzyme A carboxylase carboxyl transferase subunit alpha (Rhizobium etli (strain ATCC 51251 / DSM 11541 / JCM 21823 / NBRC 15573 / CFN 42)).